A 421-amino-acid chain; its full sequence is Testin (421 aa).

Residues 92–199 form the PET domain; that stretch reads MILTNPVAAK…GDVKLPCEMD (108 aa). Residues 133–164 are disordered; it reads EKQPVAGSEGAQYRKKQLAKQLPAHDQDPSKC. Residues 155–164 show a composition bias toward basic and acidic residues; sequence PAHDQDPSKC. LIM zinc-binding domains follow at residues 234–297, 299–359, and 362–421; these read YSCY…CDSE, PRCA…NHAV, and QGCH…KMMS.

This sequence belongs to the prickle / espinas / testin family. Interacts via LIM domain 1 with ZYX. Interacts (via LIM domain 3) with ENAH and VASP. Interacts with ALKBH4, talin, actin, alpha-actinin, GRIP1 and PXN. Interacts (via LIM domain 2) with ACTL7A (via N-terminus). Heterodimer with ACTL7A; the heterodimer interacts with ENAH to form a heterotrimer.

Its subcellular location is the cytoplasm. The protein localises to the cell junction. The protein resides in the focal adhesion. Functionally, scaffold protein that may play a role in cell adhesion, cell spreading and in the reorganization of the actin cytoskeleton. Plays a role in the regulation of cell proliferation. May act as a tumor suppressor. The protein is Testin (TES) of Ateles geoffroyi (Black-handed spider monkey).